Reading from the N-terminus, the 894-residue chain is Phosphoenolpyruvate carboxylase (894 aa).

Active-site residues include histidine 143 and lysine 556.

The protein belongs to the PEPCase type 1 family. Requires Mg(2+) as cofactor.

The catalysed reaction is oxaloacetate + phosphate = phosphoenolpyruvate + hydrogencarbonate. Functionally, forms oxaloacetate, a four-carbon dicarboxylic acid source for the tricarboxylic acid cycle. In Acinetobacter baumannii (strain ATCC 17978 / DSM 105126 / CIP 53.77 / LMG 1025 / NCDC KC755 / 5377), this protein is Phosphoenolpyruvate carboxylase.